Reading from the N-terminus, the 2896-residue chain is Protein PRRC2C (2896 aa).

N6-acetyllysine is present on Lys-27. A disordered region spans residues 28 to 212 (GKSLETQKTT…STAGTSEQND (185 aa)). The span at 88-97 (QEQHEEEKTP) shows a compositional bias: basic and acidic residues. Low complexity predominate over residues 105–119 (KPGVAAPPEVAPAPK). Residues 134 to 144 (QVNSQFQQEFP) show a composition bias toward polar residues. Residues 151-160 (DQEKKEKETN) are compositionally biased toward basic and acidic residues. Phosphoserine occurs at positions 187 and 191. Residues 201 to 211 (DESTAGTSEQN) show a composition bias toward polar residues. Asymmetric dimethylarginine; alternate is present on Arg-242. Position 242 is an omega-N-methylarginine; alternate (Arg-242). Arg-255 and Arg-266 each carry asymmetric dimethylarginine. Disordered stretches follow at residues 264–729 (PMRF…QHLA) and 750–788 (SGRP…SFEH). 2 positions are modified to omega-N-methylarginine: Arg-279 and Arg-281. The span at 301–310 (ELKELDKFDN) shows a compositional bias: basic and acidic residues. Ser-335 is modified (phosphoserine). Residues 341–358 (GSNSPKENNSEDQGSKAS) show a composition bias toward polar residues. A compositionally biased stretch (basic and acidic residues) spans 359 to 368 (ENNENKKETD). Residues 370-381 (VSNTKSSSQIPA) show a composition bias toward polar residues. The residue at position 392 (Lys-392) is an N6-acetyllysine. A phosphoserine mark is found at Ser-395 and Ser-500. Residues 395–405 (SFNQERGTSSH) are compositionally biased toward polar residues. Over residues 465-648 (RREEEERRME…EATPVVHETE (184 aa)) the composition is skewed to basic and acidic residues. Over residues 676 to 708 (QRQQEQMKQQQWQQQQQQGVLPQTVPSQPSSST) the composition is skewed to low complexity. Residues 759 to 769 (PIHPGMIPPKP) show a composition bias toward pro residues. Phosphoserine occurs at positions 779, 785, and 801. The segment at 804 to 1118 (RMLWGSDPYP…PVSTVQVEPA (315 aa)) is disordered. 3 stretches are compositionally biased toward basic and acidic residues: residues 825–836 (ATEEPEDVRSEA), 852–867 (NQLE…RESS), and 878–888 (SVEDVRPHHTD). 4 positions are modified to phosphoserine: Ser-867, Ser-878, Ser-920, and Ser-929. Basic and acidic residues-rich tracts occupy residues 954–993 (IDSK…ETRW), 1000–1010 (NRREEVNDRPV), and 1020–1058 (VLRD…KKDL). A coiled-coil region spans residues 1020–1046 (VLRDMKEEREQRKEKEGEKAEKVTEKV). Pro residues predominate over residues 1059–1081 (PPPPPPPQPPAPIQPQSVPPPIQ). Residues 1089–1100 (STETATLAQKPS) show a composition bias toward polar residues. Lys-1133 participates in a covalent cross-link: Glycyl lysine isopeptide (Lys-Gly) (interchain with G-Cter in SUMO2). Basic and acidic residues-rich tracts occupy residues 1143 to 1163 (SKDL…KKES), 1170 to 1180 (YWKEARERDWF), 1214 to 1230 (HTRD…RAEH), and 1237 to 1248 (RQREESETRSES). Disordered stretches follow at residues 1143-1647 (SKDL…DALS), 1670-1785 (EDPQ…SAPV), 1905-1991 (APAS…TAEL), 2005-2164 (ISKK…VSEM), 2218-2238 (LPNT…SLTS), 2257-2290 (WENS…GPST), 2317-2341 (GAGT…NICK), and 2668-2701 (DIKP…QSSK). Phosphoserine occurs at positions 1242, 1246, 1248, 1249, and 1263. 4 stretches are compositionally biased toward basic and acidic residues: residues 1261-1297 (RGSE…ENKK), 1305-1330 (FKPD…DKAK), 1381-1418 (EVPK…PARE), and 1429-1446 (PRQD…REAA). 2 positions are modified to phosphothreonine: Thr-1265 and Thr-1267. 2 stretches are compositionally biased toward polar residues: residues 1457-1469 (TNGT…QEPV) and 1477-1491 (GNKT…SSDQ). Basic and acidic residues predominate over residues 1505–1517 (FNERRERDEKKNA). Ser-1544 carries the post-translational modification Phosphoserine. 2 stretches are compositionally biased toward basic and acidic residues: residues 1620–1634 (NSKD…DPKP) and 1692–1704 (RLQD…KEEQ). Residues 1682–1717 (TEVVSKKQQKRLQDEERRKKEEQVIQVWNKKNANEK) are a coiled coil. The span at 1742–1785 (SSASVPPLASAPLPPSTSASVPASTSAPLPATLTPVPASTSAPV) shows a compositional bias: low complexity. Over residues 1913–1929 (APAPTPVSAPNPAPPAP) the composition is skewed to pro residues. Residues 1943 to 1952 (PLQTTSQSSK) show a composition bias toward low complexity. A Phosphothreonine modification is found at Thr-1965. Residues 1976 to 1986 (KSIQTPQSHGT) are compositionally biased toward polar residues. Residues Ser-1983 and Ser-2013 each carry the phosphoserine modification. Positions 2019–2035 (SVSAWNKPLTSFGSAPS) are enriched in polar residues. Basic and acidic residues predominate over residues 2075 to 2088 (KSADKIPEPKEQRQ). At Ser-2105 the chain carries Phosphoserine. The span at 2108-2132 (ENKEHKPGPIGKERSLKNRKVKDAQ) shows a compositional bias: basic and acidic residues. Ser-2143 bears the Phosphoserine mark. Over residues 2257–2267 (WENSPNVREKG) the composition is skewed to basic and acidic residues. At Ser-2260 the chain carries Phosphoserine. Over residues 2269–2290 (PVTSTAPPIATGVSSSASGPST) the composition is skewed to polar residues. Residues 2320-2334 (TYTTSSLSTKSTTTS) are compositionally biased toward low complexity. Phosphothreonine occurs at positions 2673 and 2682. The segment covering 2679-2701 (RSTTPTSSPFRATSTSPNSQSSK) has biased composition (polar residues). Phosphoserine is present on residues Ser-2686 and Ser-2694. The residue at position 2814 (Arg-2814) is an Omega-N-methylarginine. Arg-2823 carries the post-translational modification Asymmetric dimethylarginine; alternate. Arg-2823 bears the Omega-N-methylarginine; alternate mark. The segment covering 2824-2833 (FFSEQQQSKQ) has biased composition (polar residues). Positions 2824 to 2896 (FFSEQQQSKQ…QAIKTEETKS (73 aa)) are disordered.

In terms of tissue distribution, overexpressed in bladder cancer.

It is found in the cytoplasm. The protein resides in the stress granule. In terms of biological role, required for efficient formation of stress granules. In Homo sapiens (Human), this protein is Protein PRRC2C.